Consider the following 485-residue polypeptide: MNESVTVRGKDRYKSGVMEYKKMGYWEPDYEPKDTDVIALFRVTPQDGVDPIEASAAVAGESSTATWTVVWTDRLTAAEKYRAKCYRVDPVPNSPGQYFAYIAYDLDLFENGSIANLSASIIGNVFGFKPLKALRLEDMRLPVAYVKTFQGPATGIVVERERMDKFGRPLLGATVKPKLGLSGRNYGRVVYEALKGGLDFTKDDENINSQPFMHWRERFLYCMEAVNKAQAASGEIKGTYLNVTAGTMEEMYERAEFAKQLGSVIIMIDLVIGYTAIQSMAKWARKNDMILHLHRAGHSTYTRQRNHGVSFRVIAKWMRLAGVDHIHAGTVVGKLEGDPATTKGYYDICREDYNPANLEHGLFFDQHWASLNKLMPVASGGIHAGQMHQLLDLLGEDVVLQFGGGTIGHPMGIAAGATANRVALEAMILARNEGRDYVHEGPEILAKAAQTCTPLKAALDTWKNVSFNYESTDTPDYAPTPSVSV.

Substrate-binding residues include Asn124 and Thr174. Lys176 acts as the Proton acceptor in catalysis. Lys178 lines the substrate pocket. Residues Lys202, Asp204, and Glu205 each coordinate Mg(2+). Lys202 is subject to N6-carboxylysine. His294 serves as the catalytic Proton acceptor. Substrate contacts are provided by Arg295, His327, and Ser379.

It belongs to the RuBisCO large chain family. Type I subfamily. In terms of assembly, heterohexadecamer of 8 large chains and 8 small chains. Mg(2+) serves as cofactor.

It catalyses the reaction 2 (2R)-3-phosphoglycerate + 2 H(+) = D-ribulose 1,5-bisphosphate + CO2 + H2O. The enzyme catalyses D-ribulose 1,5-bisphosphate + O2 = 2-phosphoglycolate + (2R)-3-phosphoglycerate + 2 H(+). RuBisCO catalyzes two reactions: the carboxylation of D-ribulose 1,5-bisphosphate, the primary event in carbon dioxide fixation, as well as the oxidative fragmentation of the pentose substrate. Both reactions occur simultaneously and in competition at the same active site. This Rhodopseudomonas palustris (strain HaA2) protein is Ribulose bisphosphate carboxylase large chain.